A 474-amino-acid chain; its full sequence is Bifunctional ribulose 5-phosphate reductase/CDP-ribitol pyrophosphorylase Bcs1 (474 aa).

Residues 1 to 238 (MNKNKNIGII…DKLFQSRSHF (238 aa)) are ribitol-5-phosphate cytidylyltransferase. Residues 250–474 (YDMKDQVLVV…ITNILADLYK (225 aa)) form a ribulose-5-phosphate reductase region.

The protein in the N-terminal section; belongs to the IspD/TarI cytidylyltransferase family. It in the C-terminal section; belongs to the short-chain dehydrogenases/reductases (SDR) family. As to quaternary structure, monomer.

The catalysed reaction is D-ribitol 5-phosphate + CTP + H(+) = CDP-L-ribitol + diphosphate. It carries out the reaction D-ribitol 5-phosphate + NADP(+) = D-ribulose 5-phosphate + NADPH + H(+). Its pathway is capsule biogenesis; capsule polysaccharide biosynthesis. Its function is as follows. Catalyzes the NADPH-dependent reduction of D-ribulose 5-phosphate to D-ribitol 5-phosphate and the further reaction of D-ribitol 5-phosphate with CTP to form CDP-ribitol. This chain is Bifunctional ribulose 5-phosphate reductase/CDP-ribitol pyrophosphorylase Bcs1, found in Haemophilus influenzae.